The chain runs to 567 residues: Oxygen-dependent choline dehydrogenase (567 aa).

6-35 (DYIIVGAGSAGNTLATRLTEDEGVTVLLLE) lines the FAD pocket. Catalysis depends on His475, which acts as the Proton acceptor.

The protein belongs to the GMC oxidoreductase family. It depends on FAD as a cofactor.

It carries out the reaction choline + A = betaine aldehyde + AH2. The catalysed reaction is betaine aldehyde + NAD(+) + H2O = glycine betaine + NADH + 2 H(+). The protein operates within amine and polyamine biosynthesis; betaine biosynthesis via choline pathway; betaine aldehyde from choline (cytochrome c reductase route): step 1/1. Its function is as follows. Involved in the biosynthesis of the osmoprotectant glycine betaine. Catalyzes the oxidation of choline to betaine aldehyde and betaine aldehyde to glycine betaine at the same rate. This Pseudomonas fluorescens (strain Pf0-1) protein is Oxygen-dependent choline dehydrogenase.